Reading from the N-terminus, the 246-residue chain is Transcriptional regulatory protein LytR (246 aa).

One can recognise a Response regulatory domain in the interval 2 to 116 (KALIIDDEPL…RIEQAVNKVR (115 aa)). A 4-aspartylphosphate modification is found at Asp-53. Residues 141–245 (LPVEIDDKIH…MKDFKASIGL (105 aa)) form the HTH LytTR-type domain.

Homodimer; when phosphorylated. In terms of processing, phosphorylated and dephosphorylated by LytS.

It localises to the cytoplasm. Member of the two-component regulatory system LytR/LytS that regulates genes involved in autolysis, programmed cell death, biofilm formation and cell wall metabolism. Also participates in sensing and responding to host defense cationic antimicrobial peptides (HDPs). Upon phosphorylation by LytS, functions as a transcription regulator by direct binding to promoter regions of target genes including lrgA and lrgB, to positively regulate their expression. This Staphylococcus aureus (strain USA300) protein is Transcriptional regulatory protein LytR (lytR).